The following is a 523-amino-acid chain: Metalloprotease TIKI2 (523 aa).

The N-terminal stretch at 1–26 is a signal peptide; it reads MGKTMWARAVFLCFSVGTLLWQEVLT. Residues 27–499 lie on the Extracellular side of the membrane; that stretch reads RRIPVDTGQC…HSQSNSSPKC (473 aa). Asn225, Asn234, Asn283, and Asn341 each carry an N-linked (GlcNAc...) asparagine glycan. A helical membrane pass occupies residues 500-516; sequence LSASPAFLYTLVTLCLI. At 517-523 the chain is on the cytoplasmic side; the sequence is TTMRTRS.

This sequence belongs to the TIKI family. It depends on Mn(2+) as a cofactor. Co(2+) serves as cofactor.

It is found in the cell membrane. Functionally, metalloprotease that acts as a negative regulator of the Wnt signaling pathway by mediating the cleavage of the N-terminal residues of a subset of Wnt proteins. Following cleavage, Wnt proteins become oxidized and form large disulfide-bond oligomers, leading to their inactivation. Able to cleave wnt8. Required for head formation. The polypeptide is Metalloprotease TIKI2 (trabd2b) (Xenopus tropicalis (Western clawed frog)).